Reading from the N-terminus, the 419-residue chain is Gustatory receptor for sugar taste 64c (419 aa).

At 1-15 (MQQSGQKGTRNTLQH) the chain is on the cytoplasmic side. Residues 16-36 (AIGPVLVIAQFFGVLPVAGVW) form a helical membrane-spanning segment. At 37–48 (PSCRPERVRFRW) the chain is on the extracellular side. A helical transmembrane segment spans residues 49-69 (ISLSLLAALILFVFSIVDCAL). At 70-82 (SSKVVFDHGLKIY) the chain is on the cytoplasmic side. Residues 83-103 (TIGSLSFSVICIFCFGVFLLL) form a helical membrane-spanning segment. The Extracellular segment spans residues 104–139 (SRRWPYIIRRTAECEQIFLEPEYDCSYGRGYSSRLR). A helical transmembrane segment spans residues 140–160 (LWGVCMLVAALCEHSTYVGSA). Residues 161–204 (LYNNHLAIVECKLDANFWQNYFQRERQQLFLIMHFTAWWIPFIE) are Cytoplasmic-facing. The helical transmembrane segment at 205–225 (WTTLSMTFVWNFVDIFLILIC) threads the bilayer. The Extracellular segment spans residues 226-305 (RGMQMRFQQM…FQSKGNYADE (80 aa)). Residues 306–326 (LYFWFCLSYVIIRVLNMMFAA) traverse the membrane as a helical segment. Over 327–377 (SSIPQEAKEISYTLYEIPTEFWCVELRRLNEIFLSDHFALSGKGYFLLTRR) the chain is Cytoplasmic. A helical transmembrane segment spans residues 378–398 (LIFAMAATLMVYELVLINQMA). The Extracellular segment spans residues 399-419 (GSEVQKSFCEGGVGSSKSIFS).

Belongs to the insect chemoreceptor superfamily. Gustatory receptor (GR) family. Gr5a subfamily. Expressed in Gr5a-expressing sugar-sensing cells.

It localises to the cell membrane. Its function is as follows. One of the few identified sugar gustatory receptors identified so far and which promotes the starvation-induced increase of feeding motivation. The protein is Gustatory receptor for sugar taste 64c (Gr64c) of Drosophila melanogaster (Fruit fly).